The sequence spans 366 residues: Ribosomal RNA large subunit methyltransferase M (366 aa).

Residues S188, 221-224 (CPGG), D240, D260, and D277 contribute to the S-adenosyl-L-methionine site. K306 acts as the Proton acceptor in catalysis.

This sequence belongs to the class I-like SAM-binding methyltransferase superfamily. RNA methyltransferase RlmE family. RlmM subfamily. Monomer.

The protein localises to the cytoplasm. The enzyme catalyses cytidine(2498) in 23S rRNA + S-adenosyl-L-methionine = 2'-O-methylcytidine(2498) in 23S rRNA + S-adenosyl-L-homocysteine + H(+). Functionally, catalyzes the 2'-O-methylation at nucleotide C2498 in 23S rRNA. The polypeptide is Ribosomal RNA large subunit methyltransferase M (Sodalis glossinidius (strain morsitans)).